Consider the following 207-residue polypeptide: Pyridoxal 5'-phosphate synthase subunit PdxT (207 aa).

Position 51-53 (Gly-51–Ser-53) interacts with L-glutamine. Cys-83 (nucleophile) is an active-site residue. L-glutamine is bound by residues Arg-112 and Ile-143–Arg-144. Catalysis depends on charge relay system residues His-184 and Glu-186.

Belongs to the glutaminase PdxT/SNO family. In terms of assembly, in the presence of PdxS, forms a dodecamer of heterodimers. Only shows activity in the heterodimer.

It carries out the reaction aldehydo-D-ribose 5-phosphate + D-glyceraldehyde 3-phosphate + L-glutamine = pyridoxal 5'-phosphate + L-glutamate + phosphate + 3 H2O + H(+). It catalyses the reaction L-glutamine + H2O = L-glutamate + NH4(+). The protein operates within cofactor biosynthesis; pyridoxal 5'-phosphate biosynthesis. Catalyzes the hydrolysis of glutamine to glutamate and ammonia as part of the biosynthesis of pyridoxal 5'-phosphate. The resulting ammonia molecule is channeled to the active site of PdxS. The sequence is that of Pyridoxal 5'-phosphate synthase subunit PdxT from Kineococcus radiotolerans (strain ATCC BAA-149 / DSM 14245 / SRS30216).